The following is a 358-amino-acid chain: 3-dehydroquinate synthase (358 aa).

NAD(+) is bound by residues 70-75, 104-108, 128-129, Lys141, Lys150, and 168-171; these read DGEQYK, GVIGD, TT, and CLHT. Residues Glu183, His246, and His263 each coordinate Zn(2+).

This sequence belongs to the sugar phosphate cyclases superfamily. Dehydroquinate synthase family. Co(2+) serves as cofactor. The cofactor is Zn(2+). NAD(+) is required as a cofactor.

It is found in the cytoplasm. It catalyses the reaction 7-phospho-2-dehydro-3-deoxy-D-arabino-heptonate = 3-dehydroquinate + phosphate. It participates in metabolic intermediate biosynthesis; chorismate biosynthesis; chorismate from D-erythrose 4-phosphate and phosphoenolpyruvate: step 2/7. Catalyzes the conversion of 3-deoxy-D-arabino-heptulosonate 7-phosphate (DAHP) to dehydroquinate (DHQ). This chain is 3-dehydroquinate synthase, found in Shewanella loihica (strain ATCC BAA-1088 / PV-4).